A 641-amino-acid polypeptide reads, in one-letter code: Probable potassium transport system protein Kup 4 (641 aa).

Helical transmembrane passes span 31-51 (AALG…LYTL), 64-84 (TASA…TISI), 119-139 (ILAV…VITP), 155-175 (GSLK…FFAA), 183-203 (IGAA…VLGL), 221-241 (AIGF…GVFL), 265-285 (WYAI…ALLI), 298-318 (LCPT…TIIA), 355-375 (IYVP…TIAF), 381-401 (LAGA…CLLF), 412-432 (LAVS…FFGA), and 437-457 (IAEG…LMLT).

It belongs to the HAK/KUP transporter (TC 2.A.72) family.

It localises to the cell inner membrane. The enzyme catalyses K(+)(in) + H(+)(in) = K(+)(out) + H(+)(out). Transport of potassium into the cell. Likely operates as a K(+):H(+) symporter. The polypeptide is Probable potassium transport system protein Kup 4 (Bradyrhizobium sp. (strain BTAi1 / ATCC BAA-1182)).